A 652-amino-acid polypeptide reads, in one-letter code: DNA ligase (652 aa).

NAD(+) is bound by residues 29 to 33 (DAEYD), 78 to 79 (SL), and Glu-107. The N6-AMP-lysine intermediate role is filled by Lys-109. Residues Arg-130, Glu-164, Lys-278, and Lys-302 each contribute to the NAD(+) site. Zn(2+)-binding residues include Cys-395, Cys-398, Cys-413, and Cys-418. Residues 577-652 (ADDAILSGKT…VKDEAWLLDL (76 aa)) form the BRCT domain.

The protein belongs to the NAD-dependent DNA ligase family. LigA subfamily. Mg(2+) serves as cofactor. It depends on Mn(2+) as a cofactor.

The enzyme catalyses NAD(+) + (deoxyribonucleotide)n-3'-hydroxyl + 5'-phospho-(deoxyribonucleotide)m = (deoxyribonucleotide)n+m + AMP + beta-nicotinamide D-nucleotide.. DNA ligase that catalyzes the formation of phosphodiester linkages between 5'-phosphoryl and 3'-hydroxyl groups in double-stranded DNA using NAD as a coenzyme and as the energy source for the reaction. It is essential for DNA replication and repair of damaged DNA. In Streptococcus thermophilus (strain CNRZ 1066), this protein is DNA ligase.